A 594-amino-acid chain; its full sequence is APOBEC1 complementation factor (594 aa).

RRM domains are found at residues 56–134 (CEIF…ASVD), 136–218 (CRLF…WAEP), and 231–303 (KILY…LAKP). Residues 359–408 (HFPATKGHLSNRALIRTPSVREIYMNVPVGAAGVRGLGGRGYLAYTGLGR) are required for nuclear localization. Thr498 is subject to Phosphothreonine.

Part of the apolipoprotein B mRNA editing complex with APOBEC1. Interacts with TNPO2; TNPO2 may be responsible for transport of A1CF into the nucleus. Interacts with SYNCRIP. Interacts with CELF2/CUGBP2. Interacts with RBM47. As to expression, isoforms 1 and 2 are widely expressed while isoforms 3 and 4 are restricted to liver and small intestine.

It is found in the nucleus. The protein localises to the endoplasmic reticulum. Its subcellular location is the cytoplasm. Its function is as follows. Essential component of the apolipoprotein B mRNA editing enzyme complex which is responsible for the postranscriptional editing of a CAA codon for Gln to a UAA codon for stop in APOB mRNA. Binds to APOB mRNA and is probably responsible for docking the catalytic subunit, APOBEC1, to the mRNA to allow it to deaminate its target cytosine. The complex also seems to protect the edited APOB mRNA from nonsense-mediated decay. The chain is APOBEC1 complementation factor (A1cf) from Rattus norvegicus (Rat).